The sequence spans 252 residues: 2-succinyl-6-hydroxy-2,4-cyclohexadiene-1-carboxylate synthase (252 aa).

Belongs to the AB hydrolase superfamily. MenH family. Monomer.

The enzyme catalyses 5-enolpyruvoyl-6-hydroxy-2-succinyl-cyclohex-3-ene-1-carboxylate = (1R,6R)-6-hydroxy-2-succinyl-cyclohexa-2,4-diene-1-carboxylate + pyruvate. It functions in the pathway quinol/quinone metabolism; 1,4-dihydroxy-2-naphthoate biosynthesis; 1,4-dihydroxy-2-naphthoate from chorismate: step 3/7. The protein operates within quinol/quinone metabolism; menaquinone biosynthesis. Catalyzes a proton abstraction reaction that results in 2,5-elimination of pyruvate from 2-succinyl-5-enolpyruvyl-6-hydroxy-3-cyclohexene-1-carboxylate (SEPHCHC) and the formation of 2-succinyl-6-hydroxy-2,4-cyclohexadiene-1-carboxylate (SHCHC). The protein is 2-succinyl-6-hydroxy-2,4-cyclohexadiene-1-carboxylate synthase of Klebsiella pneumoniae (strain 342).